We begin with the raw amino-acid sequence, 159 residues long: Oleosin Cor a 12 (159 aa).

The span at 1–10 (MADRPQQLQV) shows a compositional bias: polar residues. Residues 1–24 (MADRPQQLQVHPQRGHGHYEGGIK) are disordered. Transmembrane regions (helical) follow at residues 45 to 65 (VGGTLLALAGLTLAGSVIGLL), 70 to 90 (LFIIFSPVLVPAAIVVGLAVA), and 92 to 112 (FLSSGALGLTGLSSLSWVLNY).

This sequence belongs to the oleosin family. As to expression, expressed in seeds.

It localises to the lipid droplet. The protein resides in the membrane. In terms of biological role, may have a structural role to stabilize the lipid body during desiccation of the seed by preventing coalescence of the oil. Probably interacts with both lipid and phospholipid moieties of lipid bodies. May also provide recognition signals for specific lipase anchorage in lipolysis during seedling growth. This is Oleosin Cor a 12 from Corylus avellana (European hazel).